A 34-amino-acid polypeptide reads, in one-letter code: Cytochrome b6-f complex subunit 8 (34 aa).

Residues 3-23 traverse the membrane as a helical segment; that stretch reads LLTFGWAALLAVFTFSLAMVV.

It belongs to the PetN family. In terms of assembly, the 4 large subunits of the cytochrome b6-f complex are cytochrome b6, subunit IV (17 kDa polypeptide, PetD), cytochrome f and the Rieske protein, while the 4 small subunits are PetG, PetL, PetM and PetN. The complex functions as a dimer.

The protein localises to the cellular thylakoid membrane. In terms of biological role, component of the cytochrome b6-f complex, which mediates electron transfer between photosystem II (PSII) and photosystem I (PSI), cyclic electron flow around PSI, and state transitions. This Synechococcus elongatus (strain ATCC 33912 / PCC 7942 / FACHB-805) (Anacystis nidulans R2) protein is Cytochrome b6-f complex subunit 8.